Reading from the N-terminus, the 271-residue chain is Elongation factor Ts (271 aa).

Residues 76–79 (TDFV) form an involved in Mg(2+) ion dislocation from EF-Tu region.

Belongs to the EF-Ts family.

The protein localises to the cytoplasm. Associates with the EF-Tu.GDP complex and induces the exchange of GDP to GTP. It remains bound to the aminoacyl-tRNA.EF-Tu.GTP complex up to the GTP hydrolysis stage on the ribosome. The polypeptide is Elongation factor Ts (Mycolicibacterium gilvum (strain PYR-GCK) (Mycobacterium gilvum (strain PYR-GCK))).